The primary structure comprises 407 residues: TOM1-like protein 1 (407 aa).

Glycine 2 bears the N-acetylglycine mark. Residues 55–183 (ATTENLEEPD…SLKARGIRFP (129 aa)) enclose the VHS domain. The region spanning 228–315 (FTAEQTKEAF…TLSKYEEMNK (88 aa)) is the GAT domain. The tract at residues 315-407 (KPSAPLTSHE…SSKNDDLIRF (93 aa)) is disordered. Serine 337 is subject to Phosphoserine. Residues 337–347 (SPIHGREESLV) show a composition bias toward basic and acidic residues. Positions 353 to 364 (VRGGFHGGGGSG) are enriched in gly residues. A compositionally biased stretch (basic and acidic residues) spans 388 to 407 (PDHDPKKEQSSSKNDDLIRF).

The protein belongs to the TOM1 family. In terms of tissue distribution, ubiquitously expressed.

Its subcellular location is the membrane. Might contribute to the loading of the ESCRT machinery. The chain is TOM1-like protein 1 from Arabidopsis thaliana (Mouse-ear cress).